Consider the following 200-residue polypeptide: Potassium-transporting ATPase KdpC subunit (200 aa).

The helical transmembrane segment at 6–26 (PALVLLILLTLITGIAYPLLT) threads the bilayer.

This sequence belongs to the KdpC family. The system is composed of three essential subunits: KdpA, KdpB and KdpC.

It is found in the cell inner membrane. Its function is as follows. Part of the high-affinity ATP-driven potassium transport (or Kdp) system, which catalyzes the hydrolysis of ATP coupled with the electrogenic transport of potassium into the cytoplasm. This subunit acts as a catalytic chaperone that increases the ATP-binding affinity of the ATP-hydrolyzing subunit KdpB by the formation of a transient KdpB/KdpC/ATP ternary complex. This is Potassium-transporting ATPase KdpC subunit from Yersinia pseudotuberculosis serotype O:1b (strain IP 31758).